The primary structure comprises 59 residues: Temperature acclimation protein A (59 aa).

One can recognise a CSD domain in the interval 1 to 55; sequence FNDEKGFGFITPESGPDLFVHFRAIQGNGFKSLKEGQKVTFIAVQGQKGMQADKV.

It is found in the cytoplasm. Functionally, affects cell viability at low temperatures. The chain is Temperature acclimation protein A (tapA) from Pseudomonas fragi.